We begin with the raw amino-acid sequence, 494 residues long: Tripartite motif-containing protein 5 (494 aa).

N-acetylalanine is present on alanine 2. An RING-type zinc finger spans residues 15 to 59 (CPICLELLTQPLSLDCGHSFCQACLTANHKTSMPDEGERSCPVCR). Residue serine 86 is modified to Phosphoserine. Residues 91–133 (QKVDHCARHGEKLLLFCREDRKVICWLCERSQEHRGHHTFLTE) form a B box-type zinc finger. Zn(2+) is bound by residues cysteine 96, histidine 99, cysteine 118, and histidine 124. Residues 132–241 (TEEVAQEYQM…LISDLEHRLQ (110 aa)) adopt a coiled-coil conformation. The tract at residues 186–199 (FEQLRHILDWVESN) is required for interaction with GABARAP and for autophagy. Residues 282–494 (LKVMLEVLRE…VPMTLCSPSS (213 aa)) enclose the B30.2/SPRY domain.

This sequence belongs to the TRIM/RBCC family. As to quaternary structure, can form homodimers and homotrimers. In addition to lower-order dimerization, also exhibits a higher-order multimerization and both low- and high-order multimerizations are essential for its restriction activity. Interacts with BTBD1 and BTBD2. Interacts with PSMC4, PSMC5, PSMD7 and HSPA8/HSC70. Interacts (via B30.2/SPRY domain) with HSPA1A/B. Interacts with PSMC2, MAP3K7/TAK1, TAB2 and TAB3. Interacts with SQSTM1. Interacts with TRIM6 and TRIM34. Interacts with ULK1 (phosphorylated form), GABARAP, GABARAPL1, GABARAPL2, MAP1LC3A, MAP1LC3C and BECN1. Degraded in a proteasome-independent fashion in the absence of viral infection but in a proteasome-dependent fashion following exposure to restriction sensitive virus. Post-translationally, autoubiquitinated in a RING finger- and UBE2D2-dependent manner. Monoubiquitinated by TRIM21. Deubiquitinated by Yersinia YopJ. Ubiquitination may not lead to proteasomal degradation.

Its subcellular location is the cytoplasm. It is found in the nucleus. It carries out the reaction S-ubiquitinyl-[E2 ubiquitin-conjugating enzyme]-L-cysteine + [acceptor protein]-L-lysine = [E2 ubiquitin-conjugating enzyme]-L-cysteine + N(6)-ubiquitinyl-[acceptor protein]-L-lysine.. Its pathway is protein modification; protein ubiquitination. Its function is as follows. Capsid-specific restriction factor that prevents infection from non-host-adapted retroviruses. Blocks viral replication early in the life cycle, after viral entry but before reverse transcription. In addition to acting as a capsid-specific restriction factor, also acts as a pattern recognition receptor that activates innate immune signaling in response to the retroviral capsid lattice. Binding to the viral capsid triggers its E3 ubiquitin ligase activity, and in concert with the heterodimeric ubiquitin conjugating enzyme complex UBE2V1-UBE2N (also known as UBC13-UEV1A complex) generates 'Lys-63'-linked polyubiquitin chains, which in turn are catalysts in the autophosphorylation of the MAP3K7/TAK1 complex (includes TAK1, TAB2, and TAB3). Activation of the MAP3K7/TAK1 complex by autophosphorylation results in the induction and expression of NF-kappa-B and MAPK-responsive inflammatory genes, thereby leading to an innate immune response in the infected cell. Plays a role in regulating autophagy through activation of autophagy regulator BECN1 by causing its dissociation from its inhibitors BCL2 and TAB2. This is Tripartite motif-containing protein 5 (TRIM5) from Hoolock hoolock (Western hoolock gibbon).